The primary structure comprises 390 residues: Immunoglobulin mu Fc receptor (390 aa).

The N-terminal stretch at 1-16 is a signal peptide; it reads MDFWLWPLYFLPVSGA. At 17 to 251 the chain is on the extracellular side; sequence LRILPEVKVE…GSQSGREGQG (235 aa). One can recognise an Ig-like domain in the interval 23 to 123; the sequence is VKVEGELGGS…KTQKVTLNVH (101 aa). The CDR4 stretch occupies residues 33–115; sequence VTIKCPLPEM…AGMNTDRGKT (83 aa). 2 cysteine pairs are disulfide-bonded: cysteine 37–cysteine 104 and cysteine 49–cysteine 58. The segment at 40–45 is CDR1; it reads PEMHVR. The CDR2 stretch occupies residues 59 to 70; that stretch reads GTVVSTTNFIKA. Position 92 is a phosphothreonine (threonine 92). Residues 106-115 are CDR3; the sequence is AGMNTDRGKT. Positions 166–204 are disordered; it reads PAQRGKVPPVHHSSPTTQITHRPRVSRASSVAGDKPRTF. The helical transmembrane segment at 252–272 threads the bilayer; the sequence is FHILIPTILGLFLLALLGLVV. At 273-390 the chain is on the cytoplasmic side; it reads KRAVERRKAL…DSDDYINVPA (118 aa). Low complexity-rich tracts occupy residues 293 to 311 and 325 to 334; these read MRAL…PRSQ and ADAAGTGEAP. The segment at 293–348 is disordered; it reads MRALESSQRPRGSPRPRSQNNIYSACPRRARGADAAGTGEAPVPGPGAPLPPAPLQ. Positions 335–346 are enriched in pro residues; it reads VPGPGAPLPPAP.

In terms of assembly, interacts (via Ig-like domain) with IGHM (via CH4/Cmu4 domain), both secreted and membrane-bound IgM; the interaction is glycan-independent and multivalent theoretically involving up to eight binding sites for the IgM pentamer. Phosphorylated on both Tyr and Ser residues. In terms of processing, O-glycosylated. Sialylated. O-linked glycans regulate trafficking to the plasma membrane. As to expression, expressed by CD19-positive B cells and CD4-positive and CD8-positive T cell populations in primary and secondary lymphoid tissues (at protein level). Among B cell subsets, detected in a subset of bone marrow pro- and pre-B cells, in most follicular and memory B cells and in a small subset of germinal center B cells (at protein level). Expressed at lower levels in CD56-positive NK cells (at protein level). Expressed in lymph nodes, lung, thymus and kidneys. Very weak expression detected in spleen, liver, heart, and salivary gland.

The protein resides in the cell membrane. Its subcellular location is the early endosome membrane. It is found in the golgi apparatus. It localises to the trans-Golgi network membrane. The protein localises to the lysosome membrane. The protein resides in the secreted. Functionally, high-affinity Fc receptor for immunoglobulin M (IgM), both secreted and membrane-bound IgM. Primarily regulates IgM transport and homeostasis. In lymphoid cells, enables exocytosis of membrane-bound IgM on the plasma membrane as well as endocytosis of IgM-antigen complexes toward lysosomes for degradation. In mucosal epithelium, mediates retrotranscytosis of antigen-IgM complexes across mucosal M cells toward antigen-presenting cells in mucosal lymphoid tissues. Triggers costimulatory signaling and mediates most of IgM effector functions involved in B cell development and primary immune response to infection. Likely limits tonic IgM BCR signaling to self-antigens for proper negative selection of autoreactive B cells in the bone marrow and for the maintenance of regulatory B cell pool in peripheral lymphoid organs. Mediates antibody responses to T cell-dependent and T cell-independent antigens and promotes induction of an efficient neutralizing IgG response. Engages in cross-talk with antigen-receptor signaling via the non-canonical NF-kappa-B, MAP kinases and calcium signaling pathways. In Homo sapiens (Human), this protein is Immunoglobulin mu Fc receptor.